A 345-amino-acid polypeptide reads, in one-letter code: Nuclear distribution protein nudE-like 1-A (345 aa).

A coiled-coil region spans residues 19-190; it reads WRELSKRLKQ…LAVRERQTDG (172 aa). A compositionally biased stretch (basic and acidic residues) spans 182-192; it reads AVRERQTDGTR. 2 disordered regions span residues 182–206 and 326–345; these read AVRE…CDKT and PPGV…PLSV. Pro residues predominate over residues 334–345; it reads PPSPPGMLPLSV.

The protein belongs to the nudE family. Post-translationally, phosphorylated in mitosis.

The protein resides in the cytoplasm. It is found in the cytoskeleton. It localises to the microtubule organizing center. Its subcellular location is the centrosome. The protein localises to the spindle. Required for organization of the cellular microtubule array and microtubule anchoring at the centrosome. Positively regulates the activity of the minus-end directed microtubule motor protein dynein. May enhance dynein-mediated microtubule sliding by targeting dynein to the microtubule plus end. Positively regulates lysosome peripheral distribution and ruffled border formation in osteoclasts. The protein is Nuclear distribution protein nudE-like 1-A (ndel1-a) of Xenopus laevis (African clawed frog).